The following is a 693-amino-acid chain: Exocyst complex component 7 (693 aa).

S236 carries the post-translational modification Phosphoserine. Residues 236–259 (SWGHEALRPRHSGRQTEPKKTTSA) form a disordered region.

The protein belongs to the EXO70 family. As to quaternary structure, the exocyst complex is composed of Sec3/Exoc1, Sec5/Exoc2, Sec6/Exoc3, Sec8/Exoc4, Sec10/Exoc5, Sec15/Exoc6, Exo70/Exoc7 and Exo84/Exoc8.

Its function is as follows. Required for exocytosis. Thought to function in intracellular vesicle targeting and docking before SNARE complex formation. The chain is Exocyst complex component 7 from Drosophila melanogaster (Fruit fly).